Here is a 90-residue protein sequence, read N- to C-terminus: Cyclin-dependent kinases regulatory subunit 1 (90 aa).

The protein belongs to the CKS family.

Binds to the catalytic subunit of the cyclin dependent kinases and is essential for their biological function. The chain is Cyclin-dependent kinases regulatory subunit 1 (CKS1) from Oryza sativa subsp. indica (Rice).